Consider the following 93-residue polypeptide: Small ribosomal subunit protein uS19 (93 aa).

The protein belongs to the universal ribosomal protein uS19 family.

Protein S19 forms a complex with S13 that binds strongly to the 16S ribosomal RNA. The protein is Small ribosomal subunit protein uS19 of Microcystis aeruginosa (strain NIES-843 / IAM M-2473).